Consider the following 317-residue polypeptide: MSGMIENGLQLSDNAKTLHSQMMSKGIGALFTQQELQKQMGIGSLTDLMSIVQELLDKNLIKLVKQNDELKFQGVLESEAQKKATMSAEEALVYSYIEASGREGIWSKTIKARTNLHQHVVLKCLKSLESQRYVKSVKSVKFPTRKIYMLYSLQPSVDITGGPWFTDGELDIEFINSLLTIVWRFISENTFPNGFKNFENGPKKNVFYAPNVKNYSTTQEILEFITAAQVANVELTPSNIRSLCEVLVYDDKLEKVTHDCYRVTLESILQMNQGEGEPEAGNKALEDEEEFSIFNYFKMFPASKHDKEVVYFDEWTI.

This sequence belongs to the eukaryotic RPC34/RPC39 RNA polymerase subunit family. Component of the RNA polymerase III (Pol III) complex consisting of 17 subunits. Interacts with BRF1/TDS4.

It is found in the nucleus. In terms of biological role, DNA-dependent RNA polymerase catalyzes the transcription of DNA into RNA using the four ribonucleoside triphosphates as substrates. Specific peripheric component of RNA polymerase III which synthesizes small RNAs, such as 5S rRNA and tRNAs. Involved in recruitment of Pol III to the preinitiation complex. Involved in the configuration of an initiation-competent form of RNA polymerase. This chain is DNA-directed RNA polymerase III subunit RPC6 (RPC34), found in Saccharomyces cerevisiae (strain ATCC 204508 / S288c) (Baker's yeast).